Reading from the N-terminus, the 583-residue chain is MTSIAEGLFKSLPKPKYTGEEEELPQHGQRGPRIVGPGQLDDTQIVLRRTGPPPYGNRAGWRPRAPEDFGDGGAFPEILVAQYPLDMGRKGTQSKSNALAVQVDAEGKVKYDAIARRGHSDDRIVHASFKDLIPLRQRVDMGEVSLDRPSEEEVQAQMEKTKNALASLVSGAVAAQKPKNVKGGSRAEPTFVRYTPANQMGDTSRKNDRIMKIVERQQDPMEPPKFKHKKIPRGPPSPPPPIMHSPPRKLTAEDQEAWKIPPPVSNWKNPKGYTVPLDKRLAADGRGLQDVSINDKFAQFAEALFTADRHAREEVRLRAQMQQRLAEKEKAQKEEHLRALAQKAREERSRAQSRASHSPSRGRSRSRSYSDASSRSRTPSEDEEAARERERIRRERRQDAERQLRQSRMGTERRIQAMAREQNRDISEKVALGLAKPTQSSETMWDSRLFNQTSGLSTGFNEDNPYDKPLFAAQDAINSIYRPKPQADFDDEADAEGEMSKIQKSNRFEVLGRAKEGFRGAADAEERSGPVQFEKDTADPFGIDSMIADVTGGAGGAGQKRYGIQEAEPDSRGSKRARVDEEN.

Disordered stretches follow at residues 1–68, 177–253, 321–424, and 519–583; these read MTSI…APED, KPKN…LTAE, MQQR…EQNR, and RGAA…DEEN. A compositionally biased stretch (basic and acidic residues) spans 203 to 225; that stretch reads TSRKNDRIMKIVERQQDPMEPPK. The span at 233 to 244 shows a compositional bias: pro residues; sequence RGPPSPPPPIMH. Residues 325–350 show a composition bias toward basic and acidic residues; the sequence is LAEKEKAQKEEHLRALAQKAREERSR. Residues 367–377 are compositionally biased toward low complexity; it reads RSYSDASSRSR. Composition is skewed to basic and acidic residues over residues 386-424, 519-538, and 569-583; these read ARER…EQNR, RGAA…KDTA, and PDSR…DEEN.

This sequence belongs to the SNW family. As to quaternary structure, associated with the spliceosome.

Its subcellular location is the nucleus. Involved in pre-mRNA splicing. This Emericella nidulans (strain FGSC A4 / ATCC 38163 / CBS 112.46 / NRRL 194 / M139) (Aspergillus nidulans) protein is Pre-mRNA-processing protein 45 (prp45).